We begin with the raw amino-acid sequence, 411 residues long: Serpin A3-1 (411 aa).

The signal sequence occupies residues 1 to 24; sequence MRAERTSFLLALGLLVAGIRSVHC. N-linked (GlcNAc...) asparagine glycosylation is found at N100, N180, N230, and N264.

Belongs to the serpin family. Homodimer. In terms of processing, N-glycosylated. Detected in all tissues examined (at protein level). Abundantly expressed in liver, kidney and spleen. Lowest levels were observed in diaphragm muscle.

The protein localises to the cytoplasmic vesicle. It localises to the secretory vesicle. It is found in the chromaffin granule. Its subcellular location is the secreted. Potent inhibitor of the serine proteases elastase and trypsin. Moderately inhibits the serine proteases plasmin and chymotrypsin, and the thiol protease proenkephalin-processing enzyme. Does not inhibit the serine proteases cathepsin G, furin, kallikrein, thrombin, tissue plasminogen activator and urokinase, or the cysteine proteases cathepsin B, cathepsin L and papain. This chain is Serpin A3-1, found in Bos taurus (Bovine).